A 302-amino-acid chain; its full sequence is Meiotic recombination protein rec14 (302 aa).

WD repeat units lie at residues 14–51 (AHQA…HSLV), 57–96 (PHKL…FRDL), 101–140 (QHPS…KISE), 142–184 (DTKG…HVLS), 185–226 (GHTS…GQLR), 227–266 (GHAA…CIST), and 269–302 (ETDG…AATE).

As to quaternary structure, component of the DSB catalytic core (DSBC) complex, composed of at least rec12, rec6 and rec14. The complex interacts with mde2.

Its function is as follows. Required for formation of the rec12-mediated double-strand breaks (DSBs) that initiate meiotic recombination. This chain is Meiotic recombination protein rec14, found in Schizosaccharomyces pombe (strain 972 / ATCC 24843) (Fission yeast).